Here is a 782-residue protein sequence, read N- to C-terminus: HHIP-like protein 1 (782 aa).

Positions 1–19 are cleaved as a signal peptide; it reads MARARAGALLALWVLGAAA. 4 cysteine pairs are disulfide-bonded: Cys-181-Cys-521, Cys-185-Cys-528, Cys-399-Cys-417, and Cys-484-Cys-584. A glycan (N-linked (GlcNAc...) asparagine) is linked at Asn-234. Residues 604 to 666 are disordered; that stretch reads EKFIPKTRST…RRGRLNSASR (63 aa). A compositionally biased stretch (low complexity) spans 610–623; it reads TRSTPRPTARAPTR. Residues 632–642 are compositionally biased toward pro residues; that stretch reads AAPPAPTPRPA. The 104-residue stretch at 673–776 folds into the SRCR domain; the sequence is VRLVRPAGLS…HDEDAGVVCS (104 aa). Intrachain disulfides connect Cys-700–Cys-765, Cys-713–Cys-775, and Cys-745–Cys-755.

Belongs to the HHIP family.

The protein localises to the secreted. This chain is HHIP-like protein 1 (HHIPL1), found in Homo sapiens (Human).